Consider the following 115-residue polypeptide: Large ribosomal subunit protein bL19 (115 aa).

This sequence belongs to the bacterial ribosomal protein bL19 family.

In terms of biological role, this protein is located at the 30S-50S ribosomal subunit interface and may play a role in the structure and function of the aminoacyl-tRNA binding site. This is Large ribosomal subunit protein bL19 from Koribacter versatilis (strain Ellin345).